Reading from the N-terminus, the 609-residue chain is NADH-ubiquinone oxidoreductase chain 5 (609 aa).

Helical transmembrane passes span 3-23 (VINL…LPIV), 41-61 (TAIS…IYSG), 90-110 (MIFV…SMWY), 115-135 (PFIN…MILV), 140-160 (LFQL…LIGW), 174-194 (AVLY…WFLI), 214-236 (VPLM…HPWL), 244-264 (TPVS…FLLI), 276-296 (MQTT…ICAL), 304-323 (IIAF…IGIN), 328-350 (AFLH…GSII), 368-388 (VLPF…GMPF), 410-432 (WALL…IMFF), 460-480 (LLLG…PTST), 491-511 (LMAL…NLTS), and 585-605 (GLIK…LMMI).

Belongs to the complex I subunit 5 family. In terms of assembly, core subunit of respiratory chain NADH dehydrogenase (Complex I) which is composed of 45 different subunits.

The protein resides in the mitochondrion inner membrane. It carries out the reaction a ubiquinone + NADH + 5 H(+)(in) = a ubiquinol + NAD(+) + 4 H(+)(out). In terms of biological role, core subunit of the mitochondrial membrane respiratory chain NADH dehydrogenase (Complex I) which catalyzes electron transfer from NADH through the respiratory chain, using ubiquinone as an electron acceptor. Essential for the catalytic activity and assembly of complex I. This Halichoerus grypus (Gray seal) protein is NADH-ubiquinone oxidoreductase chain 5 (MT-ND5).